Here is a 125-residue protein sequence, read N- to C-terminus: Probable 4-amino-4-deoxy-L-arabinose-phosphoundecaprenol flippase subunit ArnF (125 aa).

At 1–2 (MG) the chain is on the cytoplasmic side. A helical membrane pass occupies residues 3-23 (VMWGLISVAIASLAQLSLGFA). At 24-33 (MMRLPSIAHP) the chain is on the periplasmic side. Residues 34 to 54 (LAFISGLGAFNAATLALFAGL) form a helical membrane-spanning segment. The Cytoplasmic portion of the chain corresponds to 55–76 (AGYLVSVFCWQKTLHMLALSKA). The helical transmembrane segment at 77–97 (YALLSLSYVLVWVASMLLPGL) threads the bilayer. Over 98–100 (QGA) the chain is Periplasmic. The helical transmembrane segment at 101 to 121 (FSLKAMLGVLCIMAGVMLIFL) threads the bilayer. The Cytoplasmic portion of the chain corresponds to 122–125 (PARS).

The protein belongs to the ArnF family. Heterodimer of ArnE and ArnF.

Its subcellular location is the cell inner membrane. Its pathway is bacterial outer membrane biogenesis; lipopolysaccharide biosynthesis. Its function is as follows. Translocates 4-amino-4-deoxy-L-arabinose-phosphoundecaprenol (alpha-L-Ara4N-phosphoundecaprenol) from the cytoplasmic to the periplasmic side of the inner membrane. The polypeptide is Probable 4-amino-4-deoxy-L-arabinose-phosphoundecaprenol flippase subunit ArnF (Salmonella paratyphi A (strain ATCC 9150 / SARB42)).